A 196-amino-acid polypeptide reads, in one-letter code: Holliday junction branch migration complex subunit RuvA (196 aa).

The domain I stretch occupies residues 1-63 (MINKIYGKVI…ENELKLFGFL (63 aa)). Residues 64 to 139 (NSDERETFKS…KLLINNELES (76 aa)) are domain II. Position 139 (serine 139) is a region of interest, flexible linker. Positions 139–196 (SSLFRFKELEESIVSMGFDRKIVNSKLKEAFNLVEFSNLKDSEKEQFLFKEVLKRMSN) are domain III.

The protein belongs to the RuvA family. As to quaternary structure, homotetramer. Forms an RuvA(8)-RuvB(12)-Holliday junction (HJ) complex. HJ DNA is sandwiched between 2 RuvA tetramers; dsDNA enters through RuvA and exits via RuvB. An RuvB hexamer assembles on each DNA strand where it exits the tetramer. Each RuvB hexamer is contacted by two RuvA subunits (via domain III) on 2 adjacent RuvB subunits; this complex drives branch migration. In the full resolvosome a probable DNA-RuvA(4)-RuvB(12)-RuvC(2) complex forms which resolves the HJ.

The protein localises to the cytoplasm. In terms of biological role, the RuvA-RuvB-RuvC complex processes Holliday junction (HJ) DNA during genetic recombination and DNA repair, while the RuvA-RuvB complex plays an important role in the rescue of blocked DNA replication forks via replication fork reversal (RFR). RuvA specifically binds to HJ cruciform DNA, conferring on it an open structure. The RuvB hexamer acts as an ATP-dependent pump, pulling dsDNA into and through the RuvAB complex. HJ branch migration allows RuvC to scan DNA until it finds its consensus sequence, where it cleaves and resolves the cruciform DNA. In Borreliella afzelii (strain PKo) (Borrelia afzelii), this protein is Holliday junction branch migration complex subunit RuvA.